The sequence spans 362 residues: MKEKWLMALASEWDDVKPLITTALESGFDCVVVSRDHIELVRELGSIRIACFGRERGSEDLLIMDTSVPRENQIKSVEKIGRPIGGYVEIRSKEDELFATELGKHVDYLLVVGTDWKVIPLENMIAALQGYDCKIISCVRSSEEAEVALSTLEHGADGVLLDTRDPSEIKRVQAAAERLGMSRIDLKTATVVAVKPVGMGDRVCVDTCSLMRRGEGMLVGSQSRAFFLVQSEAEESPYVAARPFRVNAGAVHAYIRVGDKTRYLSELKSGDEVTIVDKDGMTRSAVVGRVKIERRPMILVEAEVDGERVSTLLQNAETIKLVSHDGTPISVAELKPGDKVLVHVETSARHFGMSIEETIIER.

It belongs to the archaeal-type DHQ synthase family.

The enzyme catalyses 2-amino-2,3,7-trideoxy-D-lyxo-hept-6-ulosonate + NAD(+) + H2O = 3-dehydroquinate + NH4(+) + NADH + H(+). Its function is as follows. Catalyzes the oxidative deamination and cyclization of 2-amino-3,7-dideoxy-D-threo-hept-6-ulosonic acid (ADH) to yield 3-dehydroquinate (DHQ), which is fed into the canonical shikimic pathway of aromatic amino acid biosynthesis. The sequence is that of 3-dehydroquinate synthase from Methanothrix thermoacetophila (strain DSM 6194 / JCM 14653 / NBRC 101360 / PT) (Methanosaeta thermophila).